The chain runs to 1040 residues: Multidrug resistance protein MdtB (1040 aa).

The next 12 helical transmembrane spans lie at 16 to 36 (FIMR…AGII), 342 to 362 (DTQF…YLFL), 369 to 389 (IIPG…MVFL), 396 to 416 (LTLM…IVVI), 440 to 460 (IGFT…PLLF), 472 to 492 (FAVT…TLTP), 537 to 557 (WLTL…WVFI), 863 to 883 (LGST…VLGV), 888 to 908 (FIHP…ALLA), 911 to 931 (LAGS…IGIV), 968 to 988 (ILMT…STGV), and 998 to 1018 (IGMV…TPVI).

This sequence belongs to the resistance-nodulation-cell division (RND) (TC 2.A.6) family. MdtB subfamily. Part of a tripartite efflux system composed of MdtA, MdtB and MdtC. MdtB forms a heteromultimer with MdtC.

The protein localises to the cell inner membrane. The chain is Multidrug resistance protein MdtB from Klebsiella pneumoniae (strain 342).